The chain runs to 90 residues: MVKNSFISVISQEKKEENKGSVEFQVFNFNNKIRILTSHLELHRKDYSSQRGLRKILGKRQRLLSYLSKKNRVRYKELIGQLGILEQKAR.

It belongs to the universal ribosomal protein uS15 family. As to quaternary structure, part of the 30S ribosomal subunit.

It localises to the plastid. Its subcellular location is the chloroplast. In Buxus microphylla (Littleleaf boxwood), this protein is Small ribosomal subunit protein uS15c (rps15).